Consider the following 345-residue polypeptide: Transcription factor 19 (345 aa).

An FHA domain is found at 31 to 88; the sequence is YRLGHRADLCDVALRPQQEPGLISGIHAELHAEPRGDDWRVSLEDHSLQGTLVNNVRL. Disordered stretches follow at residues 138 to 167 and 190 to 277; these read RSRG…STLS and LTFS…KYPV. Residues 293–342 form a PHD-type zinc finger; that stretch reads AAPCCCLPQEETVAWVQCDGCDVWFHVACVGCSIQAAREADFRCPGCRAG. Zn(2+) is bound by residues C296, C298, C310, C313, H318, C321, C336, and C339.

Its subcellular location is the nucleus. Its function is as follows. Potential transcription factor that may play a role in the regulation of genes involved in cell cycle G1/S transition. May bind to regulatory elements of genes, including the promoter of the transcription factor FOXO1. This chain is Transcription factor 19 (TCF19), found in Macaca mulatta (Rhesus macaque).